Reading from the N-terminus, the 102-residue chain is Acid shock protein (102 aa).

The first 21 residues, 1–21, serve as a signal peptide directing secretion; that stretch reads MKKVLALVVAAAMGLSSAAFA. The propeptide occupies 22–58; it reads AETAITPAPTATTTKAAPAKTTHHKKQHKAAPAQKAQ. Positions 26–41 are enriched in low complexity; it reads ITPAPTATTTKAAPAK. The segment at 26 to 102 is disordered; it reads ITPAPTATTT…PAKPAAQPAA (77 aa). The span at 80 to 90 shows a compositional bias: basic residues; sequence AAKKHAKKHSH. Low complexity predominate over residues 91-102; the sequence is QQPAKPAAQPAA.

It belongs to the Asr family. In terms of processing, proteolytic processing gives rise to the active protein.

The protein localises to the periplasm. Required for growth and/or survival at acidic conditions. The polypeptide is Acid shock protein (Escherichia coli O81 (strain ED1a)).